A 332-amino-acid polypeptide reads, in one-letter code: Putative pumilio homolog 17 (332 aa).

The PUM-HD domain occupies 1–302 (MTNINRLSMS…ILTADLFYSL (302 aa)). One copy of the Pumilio 1 repeat lies at 82-117 (SDSDYFMVITRNKNGSKSLQKLMRMSDDMDVFFFVA). One copy of the Pumilio 2; degenerate repeat lies at 118 to 152 (IMRLFIHVMIDKYASYVAIQGMRIFKQDKRELMYD). Pumilio repeat units follow at residues 153 to 188 (HILRYALFLARDQYGCIALNEIIKELDDPYYRDELM), 189 to 225 (DIVSNNALLLSNDAYGNFVVQHVLKLHDSRCTGNIAD), 226 to 264 (KLCGYCVELSFKKYGSYIVERLLEVRDIPMATIVLDLLA), and 265 to 300 (CKTEMLIRLARSENGNFVVCKLLELTNDILTADLFY).

Its subcellular location is the cytoplasm. Its function is as follows. Sequence-specific RNA-binding protein that regulates translation and mRNA stability by binding the 3'-UTR of target mRNAs. The chain is Putative pumilio homolog 17 (APUM17) from Arabidopsis thaliana (Mouse-ear cress).